A 457-amino-acid polypeptide reads, in one-letter code: Argininosuccinate lyase (457 aa).

It belongs to the lyase 1 family. Argininosuccinate lyase subfamily.

It localises to the cytoplasm. The enzyme catalyses 2-(N(omega)-L-arginino)succinate = fumarate + L-arginine. It functions in the pathway amino-acid biosynthesis; L-arginine biosynthesis; L-arginine from L-ornithine and carbamoyl phosphate: step 3/3. This is Argininosuccinate lyase from Klebsiella pneumoniae (strain 342).